Reading from the N-terminus, the 601-residue chain is Secretogranin-2 (601 aa).

Positions 1–30 are cleaved as a signal peptide; it reads MSSQRNYCLAGCLSSCILVILMSFSDAASF. Positions 89–109 are disordered; that stretch reads EQKDTQALSTDTAKSPTSDDE. Residues 93–104 show a composition bias toward polar residues; that stretch reads TQALSTDTAKSP. Tyr-151 carries the sulfotyrosine modification. Residues 258–273 show a composition bias toward basic and acidic residues; it reads VESQTQEELKESKEEV. Positions 258–307 are disordered; sequence VESQTQEELKESKEEVEKTDDMEDEIKRSGLLGLQDEEPEKDTKEQESEN.

The protein belongs to the chromogranin/secretogranin protein family.

The protein resides in the secreted. Functionally, neuroendocrine protein of the granin family that regulates the biogenesis of secretory granules. The chain is Secretogranin-2 from Pelophylax ridibundus (Marsh frog).